The following is a 456-amino-acid chain: Glutamate--tRNA ligase 2 (456 aa).

Residues P8–N18 carry the 'HIGH' region motif. The 'KMSKS' region signature appears at G249–R253. ATP is bound at residue K252.

Belongs to the class-I aminoacyl-tRNA synthetase family. Glutamate--tRNA ligase type 1 subfamily. Monomer.

Its subcellular location is the cytoplasm. The catalysed reaction is tRNA(Glu) + L-glutamate + ATP = L-glutamyl-tRNA(Glu) + AMP + diphosphate. Catalyzes the attachment of glutamate to tRNA(Glu) in a two-step reaction: glutamate is first activated by ATP to form Glu-AMP and then transferred to the acceptor end of tRNA(Glu). The polypeptide is Glutamate--tRNA ligase 2 (Bartonella bacilliformis (strain ATCC 35685 / KC583 / Herrer 020/F12,63)).